The primary structure comprises 159 residues: MKLNELRDNEGARYQSKRLGRGIGSGKGKTSGKGVKGQTSRTGVAINGFEGGQMPIYRRLPKRGFHNPNAKHFAVINLGRLQKAIDEKRIDAKATITAEILSAAGLIGKVLDGVRLLGHGEIKAKVSIEVTGASAAAIAAVEKAGGSVTVAAPKAVAEG.

Positions 1–11 (MKLNELRDNEG) are enriched in basic and acidic residues. Residues 1–40 (MKLNELRDNEGARYQSKRLGRGIGSGKGKTSGKGVKGQTS) are disordered. Over residues 21 to 35 (RGIGSGKGKTSGKGV) the composition is skewed to gly residues.

It belongs to the universal ribosomal protein uL15 family. Part of the 50S ribosomal subunit.

Its function is as follows. Binds to the 23S rRNA. This chain is Large ribosomal subunit protein uL15, found in Paramagnetospirillum magneticum (strain ATCC 700264 / AMB-1) (Magnetospirillum magneticum).